We begin with the raw amino-acid sequence, 331 residues long: Ferredoxin--NADP reductase 2 (331 aa).

Residues glutamate 37, glutamine 45, tyrosine 50, valine 90, phenylalanine 124, aspartate 286, and threonine 327 each coordinate FAD.

It belongs to the ferredoxin--NADP reductase type 2 family. As to quaternary structure, homodimer. It depends on FAD as a cofactor.

It catalyses the reaction 2 reduced [2Fe-2S]-[ferredoxin] + NADP(+) + H(+) = 2 oxidized [2Fe-2S]-[ferredoxin] + NADPH. This Listeria welshimeri serovar 6b (strain ATCC 35897 / DSM 20650 / CCUG 15529 / CIP 8149 / NCTC 11857 / SLCC 5334 / V8) protein is Ferredoxin--NADP reductase 2.